Here is a 438-residue protein sequence, read N- to C-terminus: EF-hand calcium-binding domain-containing protein 3 (438 aa).

EF-hand domains lie at 47-82 (SQMA…LGMN) and 83-118 (LTKH…KNLF). Residues Asp-96, Asp-98, Asp-100, Lys-102, and Asp-107 each coordinate Ca(2+). A Phosphotyrosine modification is found at Tyr-279. The span at 405-415 (SSHNSRSSSSS) shows a compositional bias: low complexity. The tract at residues 405–438 (SSHNSRSSSSSDTSECYTDSGRKRKRKGLKGFQQ) is disordered. Over residues 426–438 (RKRKRKGLKGFQQ) the composition is skewed to basic residues.

The chain is EF-hand calcium-binding domain-containing protein 3 (EFCAB3) from Homo sapiens (Human).